The following is a 292-amino-acid chain: 33 kDa chaperonin (292 aa).

Intrachain disulfides connect C230–C232 and C263–C266.

Belongs to the HSP33 family. In terms of processing, under oxidizing conditions two disulfide bonds are formed involving the reactive cysteines. Under reducing conditions zinc is bound to the reactive cysteines and the protein is inactive.

The protein localises to the cytoplasm. Its function is as follows. Redox regulated molecular chaperone. Protects both thermally unfolding and oxidatively damaged proteins from irreversible aggregation. Plays an important role in the bacterial defense system toward oxidative stress. The protein is 33 kDa chaperonin of Sodalis glossinidius (strain morsitans).